The sequence spans 543 residues: Sarafotoxin (543 aa).

Positions 1 to 23 are cleaved as a signal peptide; it reads MALLPRLAAGGLLLLLALAALEG. A propeptide spanning residues 24–69 is cleaved from the precursor; it reads KPAPSALSQLLEKRSEDQAAAGRIIDGGDTKQAARDPSPQRNVEPL. Residues 45-65 form a disordered region; that stretch reads GRIIDGGDTKQAARDPSPQRN. Repeat copies occupy residues 51-90, 91-130, 131-170, 171-210, 211-250, 251-290, 291-330, 331-370, 371-410, 411-450, 451-490, and 491-530. Positions 51 to 530 are 12 X 40 AA tandem repeats; sequence GDTKQAARDP…LNFCHQDVIW (480 aa). 2 disulfide bridges follow: C70–C84 and C72–C80. Residues 92-109 constitute a propeptide that is removed on maturation; it reads DTKQAARDPSPQRNVEPL. Disulfide bonds link C110–C124 and C112–C120. The propeptide occupies 132-149; the sequence is DTKQAARDPSPQRNVEPL. 2 disulfides stabilise this stretch: C150/C164 and C152/C160. Residues 172-189 constitute a propeptide that is removed on maturation; it reads DTKQAARDPSPQRNVEPL. 2 cysteine pairs are disulfide-bonded: C190/C204 and C192/C200. The propeptide occupies 212-229; it reads DTKQAARDPSPQRNVEPL. Intrachain disulfides connect C230–C244 and C232–C240. A propeptide spanning residues 252–269 is cleaved from the precursor; the sequence is DTKQAARDPSPQRNVEPL. Intrachain disulfides connect C270–C284 and C272–C280. Positions 292–309 are excised as a propeptide; the sequence is DTKQAARDPSPQRNVEPL. 2 cysteine pairs are disulfide-bonded: C310–C324 and C312–C320. The propeptide occupies 332 to 349; that stretch reads DTKQAARDPSPQRNVEPL. Cystine bridges form between C350–C364 and C352–C360. The propeptide occupies 372–389; that stretch reads DTKQAARDPSPQRNVEPL. 2 cysteine pairs are disulfide-bonded: C390–C404 and C392–C400. Residues 412–429 constitute a propeptide that is removed on maturation; the sequence is DTKQAARDPSPQRNVEPL. 2 cysteine pairs are disulfide-bonded: C430/C444 and C432/C440. A propeptide spanning residues 452 to 469 is cleaved from the precursor; that stretch reads DTKQAARDPSPQRNVEPL. Disulfide bonds link C470–C484 and C472–C480. A propeptide spanning residues 492–509 is cleaved from the precursor; that stretch reads DTKQAARDPSPQRNVEPL. 2 disulfide bridges follow: C510/C524 and C512/C520. A propeptide spanning residues 532 to 543 is cleaved from the precursor; that stretch reads NADTSANPEFLG.

This sequence belongs to the endothelin/sarafotoxin family. Expressed by the venom gland.

It is found in the secreted. In terms of biological role, vasoconstrictor activity. These toxins cause cardiac arrest probably as a result of coronary vasospasm. Its function is as follows. Vasoconstrictor activity. Causes cardiac arrest probably as a result of coronary vasospasm. Displays high agonistic activities towards endothelin-2 receptor (EDNRB) (displays affinity in the picomolar range) and endothelin-1 receptor (EDNRA) (lower affinities). In Atractaspis engaddensis (Israeli burrowing asp), this protein is Sarafotoxin.